The following is a 416-amino-acid chain: Serine hydroxymethyltransferase (416 aa).

(6S)-5,6,7,8-tetrahydrofolate contacts are provided by residues leucine 120 and 124–126 (GHL). At lysine 230 the chain carries N6-(pyridoxal phosphate)lysine. Glutamate 246 contacts (6S)-5,6,7,8-tetrahydrofolate.

Belongs to the SHMT family. In terms of assembly, homodimer. The cofactor is pyridoxal 5'-phosphate.

The protein resides in the cytoplasm. The enzyme catalyses (6R)-5,10-methylene-5,6,7,8-tetrahydrofolate + glycine + H2O = (6S)-5,6,7,8-tetrahydrofolate + L-serine. It participates in one-carbon metabolism; tetrahydrofolate interconversion. Its pathway is amino-acid biosynthesis; glycine biosynthesis; glycine from L-serine: step 1/1. In terms of biological role, catalyzes the reversible interconversion of serine and glycine with tetrahydrofolate (THF) serving as the one-carbon carrier. This reaction serves as the major source of one-carbon groups required for the biosynthesis of purines, thymidylate, methionine, and other important biomolecules. Also exhibits THF-independent aldolase activity toward beta-hydroxyamino acids, producing glycine and aldehydes, via a retro-aldol mechanism. In Onion yellows phytoplasma (strain OY-M), this protein is Serine hydroxymethyltransferase.